We begin with the raw amino-acid sequence, 629 residues long: Tudor and KH domain-containing protein homolog (629 aa).

Residues 9-29 (LPIALGLSLVTVTAFVAYYVL) traverse the membrane as a helical segment. 2 consecutive KH domains span residues 46 to 109 (INTI…ETLI) and 119 to 185 (IMSE…KKLV). The tract at residues 198–240 (IEQSKRPPRHSSSPPSPCPSPGDRDADADAQGDVDHTRVKYKR) is disordered. Over residues 219–240 (GDRDADADAQGDVDHTRVKYKR) the composition is skewed to basic and acidic residues. Residues 297–362 (HVSVGQVVAA…CELRADLLRL (66 aa)) enclose the Tudor domain. The interval 464–526 (PAPSPRPSPP…GDDSKDKDGI (63 aa)) is disordered.

Belongs to the Tdrkh family. Interacts with (symmetrically methylated) Siwi. Interacts with (symmetrically methylated) Ago3. Interacts with PNLDC1/trimmer; interaction takes place on the mitochondrial surface and recruits PNLDC1/trimmer to Siwi-bound pre-piRNAs.

It localises to the mitochondrion outer membrane. In terms of biological role, participates in the primary piRNA biogenesis pathway and is required during spermatogenesis to repress transposable elements and prevent their mobilization, which is essential for the germline integrity. The piRNA metabolic process mediates the repression of transposable elements during meiosis by forming complexes composed of piRNAs and Piwi proteins (Siwi or Ago3) and govern the methylation and subsequent repression of transposons. Required for the final steps of primary piRNA biogenesis by participating in the processing of 31-37 nt intermediates into mature piRNAs: acts by recruiting the exonuclease PNLDC1/trimmer to Siwi-bound pre-piRNAs. The chain is Tudor and KH domain-containing protein homolog from Bombyx mori (Silk moth).